The chain runs to 3718 residues: Laminin subunit alpha-5 (3718 aa).

The N-terminal stretch at 1–40 (MAKRGGQLCAGSAPGALGPRSPAPRPLLLLLAGLALVGEA) is a signal peptide. Residues 46 to 304 (DGFSLHPPYF…SIKDISIGGR (259 aa)) form the Laminin N-terminal domain. Asn100, Asn148, and Asn248 each carry an N-linked (GlcNAc...) asparagine glycan. Disulfide bonds link Cys305/Cys314, Cys307/Cys327, Cys329/Cys338, Cys341/Cys361, Cys364/Cys373, Cys366/Cys398, Cys401/Cys410, Cys413/Cys431, Cys434/Cys445, Cys436/Cys452, Cys454/Cys463, and Cys466/Cys476. Laminin EGF-like domains are found at residues 305–363 (CVCH…ECQS), 364–433 (CNCH…VCRP), and 434–479 (CDCE…CYPL). N-linked (GlcNAc...) asparagine glycosylation is present at Asn383. Residue Asn457 is glycosylated (N-linked (GlcNAc...) asparagine). An N-linked (GlcNAc...) asparagine glycan is attached at Asn485. Disulfide bonds link Cys500–Cys512, Cys502–Cys521, Cys523–Cys532, Cys535–Cys544, Cys547–Cys559, Cys549–Cys566, Cys568–Cys577, Cys580–Cys590, Cys593–Cys605, Cys595–Cys611, Cys613–Cys622, Cys625–Cys635, Cys638–Cys650, Cys640–Cys656, Cys658–Cys667, Cys670–Cys680, Cys683–Cys695, Cys685–Cys702, Cys704–Cys713, Cys716–Cys731, Cys752–Cys761, Cys764–Cys779, Cys782–Cys796, Cys784–Cys802, Cys804–Cys813, Cys816–Cys831, Cys834–Cys846, Cys836–Cys853, and Cys855–Cys864. 7 Laminin EGF-like domains span residues 500 to 546 (CDCN…SCHP), 547 to 592 (CQCS…LCQL), 593 to 637 (CGCS…DCHA), 638 to 682 (CACD…SCIP), 683 to 728 (CHCS…YCEA), 729 to 781 (GSCH…GCTR), and 782 to 833 (CSCD…GCRS). The Laminin EGF-like 11; truncated domain maps to 834 to 855 (CRCDVGGALGQGCEPKTGACRC). Residues 856 to 1442 (RPNTQGPTCS…SLFYNNGALP (587 aa)) form a domain IV 1 (domain IV B) region. N-linked (GlcNAc...) asparagine glycans are attached at residues Asn905, Asn926, and Asn964. The segment at 1253–1284 (LTQSQELSPGAPPEGPQPRPPTAVDPNAEPTL) is disordered. A compositionally biased stretch (pro residues) spans 1262–1275 (GAPPEGPQPRPPTA). The N-linked (GlcNAc...) asparagine glycan is linked to Asn1335. Intrachain disulfides connect Cys1443–Cys1455, Cys1445–Cys1462, Cys1464–Cys1473, Cys1476–Cys1486, Cys1489–Cys1496, Cys1491–Cys1503, Cys1505–Cys1514, Cys1517–Cys1530, Cys1533–Cys1548, Cys1535–Cys1555, Cys1557–Cys1566, Cys1569–Cys1579, Cys1582–Cys1594, Cys1584–Cys1601, Cys1603–Cys1612, and Cys1615–Cys1630. 4 consecutive Laminin EGF-like domains span residues 1443 to 1488 (CGCH…NCRP), 1489 to 1532 (CDCG…GCEE), 1533 to 1581 (CNCS…SCRP), and 1582 to 1632 (CDCH…GCTR). Asn1534 carries an N-linked (GlcNAc...) asparagine glycan. One can recognise a Laminin EGF-like 16; first part domain in the interval 1633-1642 (CFCFGATERC). Residues 1646 to 1831 (NLARHEFVDM…RGPPASNVEL (186 aa)) form the Laminin IV type A domain. 2 short sequence motifs (cell attachment site) span residues 1723–1725 (RGD) and 1839–1841 (RGD). Residues 1832-1864 (CMCPANYRGDSCQECAPGYYRDTKGLFLGRCVP) form the Laminin EGF-like 16; second part domain. 24 cysteine pairs are disulfide-bonded: Cys1865/Cys1874, Cys1867/Cys1881, Cys1884/Cys1893, Cys1896/Cys1912, Cys1915/Cys1930, Cys1917/Cys1939, Cys1941/Cys1950, Cys1953/Cys1968, Cys1971/Cys1986, Cys1973/Cys1993, Cys1996/Cys2005, Cys2008/Cys2022, Cys2025/Cys2035, Cys2027/Cys2042, Cys2044/Cys2053, Cys2056/Cys2069, Cys2072/Cys2083, Cys2074/Cys2090, Cys2092/Cys2101, Cys2104/Cys2116, Cys2119/Cys2126, Cys2121/Cys2133, Cys2135/Cys2144, and Cys2147/Cys2166. Laminin EGF-like domains follow at residues 1865 to 1914 (CQCH…PCVS), 1915 to 1970 (CPCP…SCQP), 1971 to 2024 (CDCS…NCTR), 2025 to 2071 (CDCS…GCRP), 2072 to 2118 (CACG…GCRR), and 2119 to 2168 (CQCP…HCEV). N-linked (GlcNAc...) asparagine glycosylation occurs at Asn2021. Residues 2169–2735 (CDHCVVLLLD…AQARSAASKV (567 aa)) are domain II and I. N-linked (GlcNAc...) asparagine glycans are attached at residues Asn2198, Asn2211, Asn2365, Asn2395, Asn2425, Asn2503, and Asn2570. 2 coiled-coil regions span residues 2205–2257 (ARLH…SQAT) and 2330–2464 (TRDL…ASLD). Coiled-coil stretches lie at residues 2604 to 2621 (ARKNQLAAQIQEAQAMLA) and 2639 to 2705 (AEAL…LENR). Asn2709 carries N-linked (GlcNAc...) asparagine glycosylation. 5 consecutive Laminin G-like domains span residues 2736-2933 (KVSM…DKPC), 2947-3119 (GSYL…SFGC), 3128-3296 (TMTF…SVGC), 3337-3511 (AYQF…VTPC), and 3518-3689 (DGLF…MRGC). 2 disulfides stabilise this stretch: Cys2903–Cys2933 and Cys3094–Cys3119. N-linked (GlcNAc...) asparagine glycans are attached at residues Asn3111, Asn3213, Asn3261, and Asn3291. Cystine bridges form between Cys3265–Cys3296 and Cys3488–Cys3511. N-linked (GlcNAc...) asparagine glycosylation is found at Asn3623 and Asn3673. The cysteines at positions 3661 and 3689 are disulfide-linked.

As to quaternary structure, laminin is a complex glycoprotein, consisting of three different polypeptide chains (alpha, beta, gamma), which are bound to each other by disulfide bonds into a cross-shaped molecule comprising one long and three short arms with globules at each end. Alpha-5 is a subunit of laminin-10 (laminin-511), laminin-11 (laminin-521) and laminin-15 (laminin-523). In adult, high levels in heart, lung, and kidney; lower in brain, muscle and testis; very low in liver, gut and skin.

It localises to the secreted. The protein resides in the extracellular space. It is found in the extracellular matrix. The protein localises to the basement membrane. Its function is as follows. Binding to cells via a high affinity receptor, laminin is thought to mediate the attachment, migration and organization of cells into tissues during embryonic development by interacting with other extracellular matrix components. Alpha-5 may be the major laminin alpha chain of adult epithelial and/or endothelial basal laminae. Plays a role in the regulation of skeletogenesis, through a mechanism that involves integrin-mediated signaling and PTK2B/PYK2. The polypeptide is Laminin subunit alpha-5 (Lama5) (Mus musculus (Mouse)).